Reading from the N-terminus, the 3763-residue chain is Colossin-B (3763 aa).

The first 19 residues, 1–19, serve as a signal peptide directing secretion; sequence MKGSIFLLFIFQIFKFSSS. N-linked (GlcNAc...) asparagine glycans are attached at residues N43, N110, N258, and N284. The region spanning 619–643 is the Follistatin-like 1 domain; that stretch reads DCSTLQCPSGYECKLDKNSKTRGCI. 2 N-linked (GlcNAc...) asparagine glycosylation sites follow: N652 and N672. Follistatin-like domains lie at 701–724 and 729–752; these read HCRNVDCPKSHYCKIQRNGLPRCF and PCEFVSCDCNLECRVTSCGDAKCF. A disordered region spans residues 792–832; that stretch reads PPIFYETPSPTSAPPTETPSPTDTPTDKPTIPPTPTPTPSK. Positions 810-820 are enriched in low complexity; that stretch reads PSPTDTPTDKP. N845 and N991 each carry an N-linked (GlcNAc...) asparagine glycan. Disordered regions lie at residues 1033–1068 and 1095–1124; these read LGSSGSGSSGNSGSSGSGGSSNDSTESQWSSESESS and PQPTPSTDIPTTTTTTTSTSTTGPIEPTST. Residues 1036-1051 are compositionally biased toward gly residues; the sequence is SGSGSSGNSGSSGSGG. Low complexity-rich tracts occupy residues 1052–1068 and 1099–1124; these read SSNDSTESQWSSESESS and PSTDIPTTTTTTTSTSTTGPIEPTST. Residue N1054 is glycosylated (N-linked (GlcNAc...) asparagine). A CNA-B 1 domain is found at 1159–1227; it reads VSGVEITLIQ…LLNKYPIDTS (69 aa). N1229 and N1247 each carry an N-linked (GlcNAc...) asparagine glycan. Residues 1304-1373 enclose the CNA-B 2 domain; it reads IKGIQVTLKD…VYTMDTFQLS (70 aa). N1381 carries N-linked (GlcNAc...) asparagine glycosylation. 3 consecutive CNA-B domains span residues 1437–1515, 1582–1648, and 1731–1809; these read LPGV…IDTK, VPGI…LTLD, and VGGV…FTLS. N-linked (GlcNAc...) asparagine glycosylation is found at N1769 and N1815. The interval 1883-1955 is disordered; the sequence is GSTVDGGTSV…SEQPPEDSME (73 aa). The span at 1898–1948 shows a compositional bias: low complexity; sequence STSTTTVSSSPSSSSDIGSSSDISSEVSSSLSSSPSSSEQPSEQSSSSSEQ. The CNA-B 6 domain maps to 2015 to 2083; it reads VPDVTVTLVN…DPLSGKIDFN (69 aa). N-linked (GlcNAc...) asparagine glycosylation is found at N2128, N2145, N2243, N2294, N2351, N2378, N2453, N2493, N2496, N2516, N2572, N2601, N2624, N2668, N2698, N2714, N2781, N2787, N2800, N2838, and N2858. Residues 2143 to 2197 enclose the CNA-B 7 domain; that stretch reads FPNITVRLFDQNLQPVLDNFNIQVEPTVTNALGQYYFDNLHSGSYIVKFEVPTRY. The CNA-B 8 domain occupies 2292–2345; that stretch reads VPNVTVEIFNPTGQQVYNINELLIGSTTTDSNGYYLFDEIQPGSYIIKFSNIPN. One can recognise a CNA-B 9 domain in the interval 2453–2477; the sequence is NTTTTDQNGLYYFDNLSPGLYKLLF. One can recognise a CNA-B 10 domain in the interval 2713–2766; sequence VNGTIVTLLDINGNTMVDADSYPINSYTTGPDGYYKFDDFSFGKYIITFSGVPD. Residues 2984–3061 enclose the CNA-B 11 domain; sequence LGGVVVTLYN…DSNASPVDGY (78 aa). 10 N-linked (GlcNAc...) asparagine glycosylation sites follow: N3083, N3130, N3372, N3390, N3459, N3466, N3557, N3666, N3676, and N3681. Positions 3128–3201 constitute a CNA-B 12 domain; the sequence is YPNITVSIYT…TKTGVNLGII (74 aa). Positions 3664-3733 constitute a CNA-B 13 domain; that stretch reads MANITVQLFS…NDKRDLEKIN (70 aa).

The protein belongs to the serine-aspartate repeat-containing protein (SDr) family.

It localises to the secreted. The chain is Colossin-B (colB) from Dictyostelium discoideum (Social amoeba).